We begin with the raw amino-acid sequence, 461 residues long: Phosphoglycerate kinase, chloroplastic (461 aa).

A chloroplast-targeting transit peptide spans 1 to 60 (MALSMKMRANARVSGRRVAAVAPRVVPFSSASSSVLRSGFALRCLWTSAAWAALASVVEA). (2R)-3-phosphoglycerate contacts are provided by Ala-82, Asp-83, Asn-85, Arg-100, Ser-122, His-123, Gly-125, Arg-126, Arg-182, His-214, and Arg-215. ADP is bound at residue Gly-260. A CDP-binding site is contributed by Gly-260. Residues Lys-262 and Lys-266 each coordinate AMP. Lys-266 contributes to the ATP binding site. Position 284 (Gly-284) interacts with ADP. Gly-284 is a CDP binding site. The AMP site is built by Gly-285 and Gly-357. The ATP site is built by Gly-285 and Gly-357. CDP is bound by residues Gly-382 and Phe-387. Phe-387 is an ADP binding site. Glu-388 contacts AMP. Residues Glu-388, Asp-419, and Ser-420 each coordinate ATP. Asp-419 provides a ligand contact to Mg(2+).

This sequence belongs to the phosphoglycerate kinase family. Monomer. Mg(2+) is required as a cofactor.

It localises to the plastid. The protein resides in the chloroplast. It catalyses the reaction (2R)-3-phosphoglycerate + ATP = (2R)-3-phospho-glyceroyl phosphate + ADP. Its pathway is carbohydrate biosynthesis; Calvin cycle. This Chlamydomonas reinhardtii (Chlamydomonas smithii) protein is Phosphoglycerate kinase, chloroplastic.